We begin with the raw amino-acid sequence, 502 residues long: MRIGFDHEKYLEEQSKYILERVNNYDKLYLEFGGKLLFDLHAKRVLPGFDENAKIKLLHKLKEKVEIIICLYAGDIERNKIRGDFGITYDVDVLRLIDDLRGYDLEVNSVVITRYSGQPATNIFINKLERRGIKVYKHEATKGYPTDVDTIVSDEGYGKNPYIETTKPIVVVTAPGPGSGKLATCLSQLYHEYKRGNVAGYSKFETFPVWNVPLKHPLNIAYESATVDLKDVNMIDSFHFDAYNKVAVNYNRDIESFPVLKRIIEKITGEESVYKSPTDMGVNRVGFGIVDDEVVKEASKQEIIRRAFKTACEYKKGYVDKETFHRAKLIMEEMNLKEEDRKVVIPAREYAAKLKERANKSETCTVVALELEDGTILTGRSSELMDGTAAVILNAVKHYANISDEIHLISPVILEPIINLKAKTLGSKRTALSCEEVLIALSICAATNPTAQVAMGRLPMLKGCQAHSTTILSTNEEQTFRKLGIDVTCDPEYISESLYYNN.

This sequence belongs to the UPF0371 family.

In Clostridium botulinum (strain 657 / Type Ba4), this protein is UPF0371 protein CLJ_B0384.